The primary structure comprises 137 residues: DNA-directed RNA polymerase I subunit RPA14 (137 aa).

Positions 100-137 (PPAQDFSAAPIQVSTTEKKETSIGVSATGGKKTTFADE) are disordered. Residue serine 121 is modified to Phosphoserine.

As to quaternary structure, component of the RNA polymerase I (Pol I) complex consisting of 14 subunits: RPA135, RPA190, RPC40, RPA14, RPB5, RPO26, RPA43, RPB8, RPA12, RPB10, RPC19, RPC10, RPA49 and RPA34. The complex is composed of a horseshoe-shaped core containing ten subunits (RPA135, RPA190, RPB5, RPO26, RPB8, RPB10, RPC10, RPA12, RPC19 and RPC40) where RPA135 and RPA190 form the DNA-binding cleft. Outside of the core, RPA14 and RPA43 form the stalk that mediates interactions with transcription initiation factors and newly synthesized RNA. In terms of processing, the N-terminus is blocked.

The protein resides in the nucleus. Its subcellular location is the nucleolus. Its function is as follows. DNA-dependent RNA polymerases catalyze the transcription of DNA into RNA using the four ribonucleoside triphosphates as substrates. Component of RNA polymerase I (Pol I) which synthesizes ribosomal RNA precursors. RPA14 seems to play a role in the stability of subunits RPO26 and RPA43. In vitro, the RPA14-RPA43 subcomplex binds single-stranded RNA. The polypeptide is DNA-directed RNA polymerase I subunit RPA14 (RPA14) (Saccharomyces cerevisiae (strain ATCC 204508 / S288c) (Baker's yeast)).